We begin with the raw amino-acid sequence, 449 residues long: Required for meiotic nuclear division protein 1 homolog (449 aa).

A mitochondrion-targeting transit peptide spans 1–16 (MPATLLRAVAGSHRVL).

This sequence belongs to the RMD1/sif2 family. Homooligomer.

Its subcellular location is the mitochondrion. Required for mitochondrial translation, possibly by coordinating the assembly or maintenance of the mitochondrial ribosome. This Pongo abelii (Sumatran orangutan) protein is Required for meiotic nuclear division protein 1 homolog (RMND1).